A 496-amino-acid polypeptide reads, in one-letter code: Cytochrome P450 71D179 (496 aa).

The helical; Signal-anchor for type II membrane protein transmembrane segment at 1–21 threads the bilayer; sequence MDISISWVVIIVSVLSYLILM. Cys435 lines the heme pocket.

Belongs to the cytochrome P450 family. Heme serves as cofactor.

It localises to the membrane. It functions in the pathway secondary metabolite biosynthesis; terpenoid biosynthesis. In terms of biological role, involved in the biosynthesis of phenolic monoterpenes natural products thymol and carvacrol which have a broad range of biological activities acting as antimicrobial compounds, insecticides, antioxidants and pharmaceutical agents. Catalyzes probably the C3-hydroxylation of gamma-terpinene to produce thymol. This Thymus vulgaris (Thyme) protein is Cytochrome P450 71D179.